The chain runs to 1133 residues: Tudor domain-containing protein 1 (1133 aa).

The segment at 1–55 (MNELRMPNLVRPNRPLREPASRPLTPSRFPVPSQPDAAYTGSAAGSTGLGSPGPA) is disordered. Residues 37–46 (AAYTGSAAGS) show a composition bias toward low complexity. Zn(2+)-binding residues include C75, C78, C86, C89, C95, C99, H107, and C111. The MYND-type zinc finger occupies 75–111 (CHYCGQQGIFRCKGCKKTPYCSVDCQREDWKAHRHMC). Tudor domains follow at residues 204 to 264 (VPCV…TKPY), 435 to 494 (RPAP…LLAL), and 656 to 714 (VPKV…LLKL). The disordered stretch occupies residues 786-836 (SGNLSKDPVRSPTTKQEDLRGGDQSQALTPASNDTQAVCEDGKSEEEPSEV). Positions 808-821 (DQSQALTPASNDTQ) are enriched in polar residues. One can recognise a Tudor 4 domain in the interval 904–962 (RPVPGAACCAQFSVDKIWYRAIILEVGEAEMSVVYADYGNSEKVPVSQILPIPTRLLQL). Residues 1036-1104 (KGSPLPDASQ…QATSVHDLQG (69 aa)) are disordered. Positions 1079-1088 (VTNTQESTPQ) are enriched in polar residues.

This sequence belongs to the TDRD1 family. Interacts with MAEL. Interacts with PIWIL1, PIWIL2 and PIWIL4 (when methylated on arginine residues). In terms of tissue distribution, expressed in both the ovary and testis in the adult. Present in migrating primordial germ cells (PGCs) and also in the germ cells in both the gonadal primordia (stage 33), and in the developing ovary and testis.

It is found in the cytoplasm. Functionally, plays a central role during spermatogenesis by participating in the repression transposable elements and preventing their mobilization, which is essential for the germline integrity. Acts via the piRNA metabolic process, which mediates the repression of transposable elements during meiosis by forming complexes composed of piRNAs and Piwi proteins and governs the methylation and subsequent repression of transposons. Required for the localization of Piwi proteins to the meiotic nuage. Involved in the piRNA metabolic process by ensuring the entry of correct transcripts into the normal piRNA pool and limiting the entry of cellular transcripts into the piRNA pathway. May act by allowing the recruitment of piRNA biogenesis or loading factors that ensure the correct entry of transcripts and piRNAs into Piwi proteins. The chain is Tudor domain-containing protein 1 (tdrd1) from Oryzias latipes (Japanese rice fish).